The following is a 612-amino-acid chain: Apoptosis-inducing factor 1, mitochondrial (612 aa).

2 consecutive short sequence motifs (mitochondrial localization signal) follow at residues 1 to 30 and 62 to 88; these read MFRC…PKQR and KMDN…KTIK. The transit peptide at 1–53 directs the protein to the mitochondrion; sequence MFRCGGLAGAFKQKLVPLVRSVCVQRPKQRNRLPGNLFQQWRVPLELQMARQM. 2 propeptides (removed in mature form) span residues 54–100 and 55–101; these read ASSG…RIMG and SSGP…IMGL. K108 is modified (N6-succinyllysine). S115 is subject to Phosphoserine. The segment at 133-482 is FAD-dependent oxidoreductase; the sequence is FLLIGGGTAA…KPYWHQSMFW (350 aa). Residues 137–141, 163–164, R171, and K176 contribute to the FAD site; these read GGGTA and ED. W195 lines the NAD(+) pocket. Residue V232 participates in FAD binding. K254 participates in a covalent cross-link: Glycyl lysine isopeptide (Lys-Gly) (interchain with G-Cter in ubiquitin). The residue at position 267 (S267) is a Phosphoserine. R284 lines the FAD pocket. NAD(+) is bound by residues 307-310, E335, and K341; that span reads GGFL. S370 is modified (phosphoserine). The residue at position 387 (K387) is an N6-acetyllysine. G398 is an NAD(+) binding site. Residue D437 coordinates FAD. The Nuclear localization signal motif lies at 445 to 450; it reads KLGRRR. Residues 452 to 453, W482, and E492 contribute to the NAD(+) site; that span reads EH. FAD is bound by residues 453–454 and W482; that span reads HH. Over residues 512–528 the composition is skewed to polar residues; that stretch reads AQDNPKSATEQSGTGIR. The tract at residues 512–551 is disordered; it reads AQDNPKSATEQSGTGIRSESETESEASEITIPPSDPAVPQ. T520 is modified (phosphothreonine). S523 and S529 each carry phosphoserine. NAD(+) is bound at residue N582. K592 carries the post-translational modification N6-acetyllysine.

It belongs to the FAD-dependent oxidoreductase family. Monomer (oxidized form). Homodimer (reduced form). Upon reduction with NADH, undergoes dimerization and forms tight, long-lived FADH2-NAD charge transfer complexes (CTC) resistant to oxidation. Also dimerizes with isoform 3 preventing its release from mitochondria. Interacts with XIAP/BIRC4. Interacts (via N-terminus) with EIF3G (via C-terminus). Interacts with PRELID1. Interacts with CHCHD4; the interaction increases in presence of NADH. Interacts with processed form of PARP1 (Poly [ADP-ribose] polymerase 1, processed C-terminus); interaction is mediated with poly-ADP-ribose chains attached to PARP1, promoting translocation into the nucleus. The cofactor is FAD. Post-translationally, under normal conditions, a 54-residue N-terminal segment is first proteolytically removed during or just after translocation into the mitochondrial intermembrane space (IMS) by the mitochondrial processing peptidase (MPP) to form the inner-membrane-anchored mature form (AIFmit). During apoptosis, it is further proteolytically processed at amino-acid position 101 leading to the generation of the mature form, which is confined to the mitochondrial IMS in a soluble form (AIFsol). AIFsol is released to the cytoplasm in response to specific death signals, and translocated to the nucleus, where it induces nuclear apoptosis in a caspase-independent manner. In terms of processing, ubiquitination by XIAP/BIRC4 does not lead to proteasomal degradation. Ubiquitination at Lys-254 by XIAP/BIRC4 blocks its ability to bind DNA and induce chromatin degradation, thereby inhibiting its ability to induce cell death.

It is found in the mitochondrion intermembrane space. Its subcellular location is the mitochondrion inner membrane. The protein resides in the cytoplasm. It localises to the nucleus. The protein localises to the perinuclear region. It catalyses the reaction A + NADH + H(+) = AH2 + NAD(+). Functionally, functions both as NADH oxidoreductase and as regulator of apoptosis. In response to apoptotic stimuli, it is released from the mitochondrion intermembrane space into the cytosol and to the nucleus, where it functions as a proapoptotic factor in a caspase-independent pathway. Release into the cytoplasm is mediated upon binding to poly-ADP-ribose chains. The soluble form (AIFsol) found in the nucleus induces 'parthanatos' i.e. caspase-independent fragmentation of chromosomal DNA. Binds to DNA in a sequence-independent manner. Interacts with EIF3G, and thereby inhibits the EIF3 machinery and protein synthesis, and activates caspase-7 to amplify apoptosis. Plays a critical role in caspase-independent, pyknotic cell death in hydrogen peroxide-exposed cells. In contrast, participates in normal mitochondrial metabolism. Plays an important role in the regulation of respiratory chain biogenesis by interacting with CHCHD4 and controlling CHCHD4 mitochondrial import. The sequence is that of Apoptosis-inducing factor 1, mitochondrial (Aifm1) from Rattus norvegicus (Rat).